A 493-amino-acid chain; its full sequence is Leucine-rich repeat-containing protein 14 (493 aa).

One copy of the LRR 1; degenerate repeat lies at 111 to 146 (KHALRVLDMTGLLDDGVEQDPETMSMWDCTAAVART). The LRR 2; degenerate repeat unit spans residues 194–218 (RLCCRDLRAEDLPMRNTVALLQLLD). The stretch at 219-246 (AGCLRRIDLRFNNLGLRGLSVIIPHVAR) is one LRR 3; degenerate repeat. An LRR 4; degenerate repeat occupies 247–282 (FQHLASLRLHYVHGDSRQPSVDGEDNFRYFLAQMGR). LRR repeat units lie at residues 283–307 (FMCL…LSTL), 308–339 (QRPL…AHLK), 340–360 (KLDL…QGLL), 364–391 (ATTL…TLTR), and 392–416 (CASL…LLRD).

The protein belongs to the PRAME family. LRRC14 subfamily. Interacts with IKBKB; disrupts IKBKB-IKBKG interaction preventing I-kappa-B-kinase (IKK) core complex formation and leading to a decrease of IKBKB phosphorylation and NF-kappaB activation. Interacts with CHUK.

The protein resides in the cytoplasm. Functionally, negatively regulates Toll-like receptor-mediated NF-kappa-B signaling by disrupting IKK core complex formation through interaction with IKBKB. The protein is Leucine-rich repeat-containing protein 14 of Mus musculus (Mouse).